A 555-amino-acid polypeptide reads, in one-letter code: 2-isopropylmalate synthase (555 aa).

The region spanning 30–303 (PIWCSVDLRD…DPGLDCTDIN (274 aa)) is the Pyruvate carboxyltransferase domain. Mg(2+)-binding residues include Asp-39, His-242, His-244, and Asn-278. Positions 437 to 555 (QPDARIKFVD…VSAANRVIAK (119 aa)) are regulatory domain.

It belongs to the alpha-IPM synthase/homocitrate synthase family. LeuA type 2 subfamily. Homodimer. Mg(2+) serves as cofactor.

The protein localises to the cytoplasm. The catalysed reaction is 3-methyl-2-oxobutanoate + acetyl-CoA + H2O = (2S)-2-isopropylmalate + CoA + H(+). Its pathway is amino-acid biosynthesis; L-leucine biosynthesis; L-leucine from 3-methyl-2-oxobutanoate: step 1/4. Its function is as follows. Catalyzes the condensation of the acetyl group of acetyl-CoA with 3-methyl-2-oxobutanoate (2-ketoisovalerate) to form 3-carboxy-3-hydroxy-4-methylpentanoate (2-isopropylmalate). This is 2-isopropylmalate synthase from Brucella melitensis biotype 1 (strain ATCC 23456 / CCUG 17765 / NCTC 10094 / 16M).